The chain runs to 442 residues: 3-phosphoshikimate 1-carboxyvinyltransferase (442 aa).

3-phosphoshikimate is bound by residues lysine 23, serine 24, and arginine 28. Lysine 23 contacts phosphoenolpyruvate. 2 residues coordinate phosphoenolpyruvate: glycine 95 and arginine 123. The 3-phosphoshikimate site is built by serine 167, glutamine 169, aspartate 315, and lysine 342. Residue glutamine 169 coordinates phosphoenolpyruvate. Residue aspartate 315 is the Proton acceptor of the active site. Residues arginine 346 and arginine 390 each coordinate phosphoenolpyruvate.

Belongs to the EPSP synthase family. Monomer.

It localises to the cytoplasm. It carries out the reaction 3-phosphoshikimate + phosphoenolpyruvate = 5-O-(1-carboxyvinyl)-3-phosphoshikimate + phosphate. Its pathway is metabolic intermediate biosynthesis; chorismate biosynthesis; chorismate from D-erythrose 4-phosphate and phosphoenolpyruvate: step 6/7. Catalyzes the transfer of the enolpyruvyl moiety of phosphoenolpyruvate (PEP) to the 5-hydroxyl of shikimate-3-phosphate (S3P) to produce enolpyruvyl shikimate-3-phosphate and inorganic phosphate. The sequence is that of 3-phosphoshikimate 1-carboxyvinyltransferase from Dichelobacter nodosus (strain VCS1703A).